A 150-amino-acid polypeptide reads, in one-letter code: Histone H3-like centromeric protein A (150 aa).

Residues 1-55 (MRPGSTPPSRRKSRPPRRVSPPLPTTSRTSPRRPHAQQQRRASRASPKKRFRPGT) are disordered. A compositionally biased stretch (basic residues) spans 41–53 (RASRASPKKRFRP). Residues 53–150 (PGTRALMEIR…RIRGVNEGLG (98 aa)) form an H3-like region.

The protein belongs to the histone H3 family. As to quaternary structure, component of centromeric nucleosomes, where DNA is wrapped around a histone octamer core. The octamer contains two molecules each of H2A, H2B, CENPA and H4 assembled in one CENPA-H4 heterotetramer and two H2A-H2B heterodimers. CENPA modulates the DNA-binding characteristics of nucleosomes so that protruding DNA ends have higher flexibility than in nucleosomes containing conventional histone H3.

Its subcellular location is the nucleus. The protein resides in the chromosome. The protein localises to the centromere. In terms of biological role, histone H3-like nucleosomal protein that is specifically found in centromeric nucleosomes. Replaces conventional H3 in the nucleosome core of centromeric chromatin that serves as an assembly site for the inner kinetochore. The presence of CENPA subtly modifies the nucleosome structure and the way DNA is wrapped around the nucleosome and gives rise to protruding DNA ends that are less well-ordered and rigid compared to nucleosomes containing histone H3. May serve as an epigenetic mark that propagates centromere identity through replication and cell division. Required for recruitment and assembly of kinetochore proteins, and as a consequence required for progress through mitosis, chromosome segregation and cytokinesis. This is Histone H3-like centromeric protein A (cenpa) from Xenopus laevis (African clawed frog).